We begin with the raw amino-acid sequence, 195 residues long: ATP-dependent Clp protease proteolytic subunit (195 aa).

Catalysis depends on S98, which acts as the Nucleophile. Residue H123 is part of the active site.

It belongs to the peptidase S14 family. In terms of assembly, fourteen ClpP subunits assemble into 2 heptameric rings which stack back to back to give a disk-like structure with a central cavity, resembling the structure of eukaryotic proteasomes.

The protein localises to the cytoplasm. The enzyme catalyses Hydrolysis of proteins to small peptides in the presence of ATP and magnesium. alpha-casein is the usual test substrate. In the absence of ATP, only oligopeptides shorter than five residues are hydrolyzed (such as succinyl-Leu-Tyr-|-NHMec, and Leu-Tyr-Leu-|-Tyr-Trp, in which cleavage of the -Tyr-|-Leu- and -Tyr-|-Trp bonds also occurs).. Cleaves peptides in various proteins in a process that requires ATP hydrolysis. Has a chymotrypsin-like activity. Plays a major role in the degradation of misfolded proteins. The sequence is that of ATP-dependent Clp protease proteolytic subunit from Sulfurovum sp. (strain NBC37-1).